The primary structure comprises 129 residues: Small ribosomal subunit protein uS11 (129 aa).

Belongs to the universal ribosomal protein uS11 family. In terms of assembly, part of the 30S ribosomal subunit. Interacts with proteins S7 and S18. Binds to IF-3.

Its function is as follows. Located on the platform of the 30S subunit, it bridges several disparate RNA helices of the 16S rRNA. Forms part of the Shine-Dalgarno cleft in the 70S ribosome. This Rhodopseudomonas palustris (strain BisB5) protein is Small ribosomal subunit protein uS11.